Reading from the N-terminus, the 316-residue chain is 4-hydroxy-3-methylbut-2-enyl diphosphate reductase (316 aa).

Cysteine 12 contributes to the [4Fe-4S] cluster binding site. Positions 43 and 81 each coordinate (2E)-4-hydroxy-3-methylbut-2-enyl diphosphate. The dimethylallyl diphosphate site is built by histidine 43 and histidine 81. Histidine 43 and histidine 81 together coordinate isopentenyl diphosphate. Cysteine 103 lines the [4Fe-4S] cluster pocket. Position 131 (histidine 131) interacts with (2E)-4-hydroxy-3-methylbut-2-enyl diphosphate. Position 131 (histidine 131) interacts with dimethylallyl diphosphate. Residue histidine 131 participates in isopentenyl diphosphate binding. The active-site Proton donor is the glutamate 133. Residue threonine 170 coordinates (2E)-4-hydroxy-3-methylbut-2-enyl diphosphate. Position 198 (cysteine 198) interacts with [4Fe-4S] cluster. Residues serine 226, asparagine 228, and serine 271 each coordinate (2E)-4-hydroxy-3-methylbut-2-enyl diphosphate. 3 residues coordinate dimethylallyl diphosphate: serine 226, asparagine 228, and serine 271. Residues serine 226, asparagine 228, and serine 271 each coordinate isopentenyl diphosphate.

Belongs to the IspH family. [4Fe-4S] cluster serves as cofactor.

It catalyses the reaction isopentenyl diphosphate + 2 oxidized [2Fe-2S]-[ferredoxin] + H2O = (2E)-4-hydroxy-3-methylbut-2-enyl diphosphate + 2 reduced [2Fe-2S]-[ferredoxin] + 2 H(+). The enzyme catalyses dimethylallyl diphosphate + 2 oxidized [2Fe-2S]-[ferredoxin] + H2O = (2E)-4-hydroxy-3-methylbut-2-enyl diphosphate + 2 reduced [2Fe-2S]-[ferredoxin] + 2 H(+). It participates in isoprenoid biosynthesis; dimethylallyl diphosphate biosynthesis; dimethylallyl diphosphate from (2E)-4-hydroxy-3-methylbutenyl diphosphate: step 1/1. It functions in the pathway isoprenoid biosynthesis; isopentenyl diphosphate biosynthesis via DXP pathway; isopentenyl diphosphate from 1-deoxy-D-xylulose 5-phosphate: step 6/6. Functionally, catalyzes the conversion of 1-hydroxy-2-methyl-2-(E)-butenyl 4-diphosphate (HMBPP) into a mixture of isopentenyl diphosphate (IPP) and dimethylallyl diphosphate (DMAPP). Acts in the terminal step of the DOXP/MEP pathway for isoprenoid precursor biosynthesis. In Bacillus thuringiensis (strain Al Hakam), this protein is 4-hydroxy-3-methylbut-2-enyl diphosphate reductase.